The sequence spans 629 residues: Probable potassium transport system protein Kup 3 (629 aa).

Transmembrane regions (helical) follow at residues 20 to 40 (LSLSALGIVYGDIGTSPLYTF), 61 to 81 (VSLIIWTLIIIASVKYIHFAL), 106 to 126 (PFIIAVGLMGAALIYGDGTIT), 143 to 163 (PSLKYYVLPIAITILITLFAI), 171 to 191 (IGKAFGPVMAFWFLTIGILGA), 209 to 229 (GLSFLFSNGATGFFILCGVFL), 253 to 273 (WFGLAFPSLIFNYLGQAALVL), 291 to 311 (FLLPLIILSTVATIIASQAII), 343 to 363 (IYIGVVNWLLMLATLGLTIGF), 372 to 392 (AYGIAVSATMLCTTLLLFIAL), 400 to 420 (IITSGLVAGLFMIVDASFFAA), and 425 to 445 (FINGGYIPITLAIIIYSMMYI).

Belongs to the HAK/KUP transporter (TC 2.A.72) family.

The protein resides in the cell inner membrane. The enzyme catalyses K(+)(in) + H(+)(in) = K(+)(out) + H(+)(out). Transport of potassium into the cell. Likely operates as a K(+):H(+) symporter. This is Probable potassium transport system protein Kup 3 from Legionella pneumophila subsp. pneumophila (strain Philadelphia 1 / ATCC 33152 / DSM 7513).